The chain runs to 633 residues: Endosomal/prevacuolar sodium/hydrogen exchanger (633 aa).

Positions 1-21 are cleaved as a signal peptide; the sequence is MLSKVLLNIAFKVLLTTAKRA. Residues 22 to 61 lie on the Lumenal side of the membrane; it reads VDPDDDDELLPSPDLPGSDDPIAGDPDVDLNPVTEEMFSS. A disordered region spans residues 25-44; sequence DDDDELLPSPDLPGSDDPIA. The span at 31 to 42 shows a compositional bias: low complexity; it reads LPSPDLPGSDDP. The chain crosses the membrane as a helical span at residues 62–82; that stretch reads WALFIMLLLLISALWSSYYLT. Residues 83–85 lie on the Cytoplasmic side of the membrane; it reads QKR. The helical transmembrane segment at 86–106 threads the bilayer; sequence IRAVHETVLSIFYGMVIGLII. The Lumenal portion of the chain corresponds to 107–117; sequence RMSPGHYIQDT. A helical transmembrane segment spans residues 118–138; it reads VTFNSSYFFNVLLPPIILNSG. Residues 124-133 carry the Amiloride-binding motif; the sequence is YFFNVLLPPI. Residues 139–152 are Cytoplasmic-facing; sequence YELNQVNFFNNMLS. The chain crosses the membrane as a helical span at residues 153–173; the sequence is ILIFAIPGTFISAVVIGIILY. Residues 174 to 189 are Lumenal-facing; the sequence is IWTFLGLESIDISFAD. Residues 190 to 211 form a helical membrane-spanning segment; sequence AMSVGATLSATDPVTILSIFNA. The Cytoplasmic portion of the chain corresponds to 212 to 217; that stretch reads YKVDPK. The chain crosses the membrane as a helical span at residues 218-238; sequence LYTIIFGESLLNDAISIVMFE. Residues 239-258 lie on the Lumenal side of the membrane; it reads TCQKFHGQPATFSSVFEGAG. A helical transmembrane segment spans residues 259-279; the sequence is LFLMTFSVSLLIGVLIGILVA. Residues 280 to 288 are Cytoplasmic-facing; sequence LLLKHTHIR. Residues 289 to 308 form a helical membrane-spanning segment; it reads RYPQIESCLILLIAYESYFF. Residues 309-313 lie on the Lumenal side of the membrane; that stretch reads SNGCH. The chain crosses the membrane as a helical span at residues 314–333; that stretch reads MSGIVSLLFCGITLKHYAYY. Residues 334-344 lie on the Cytoplasmic side of the membrane; sequence NMSRRSQITIK. A helical transmembrane segment spans residues 345–364; it reads YIFQLLARLSENFIFIYLGL. Over 365 to 376 the chain is Cytoplasmic; sequence ELFTEVELVYKP. A helical membrane pass occupies residues 377 to 397; the sequence is LLIIVAAISICVARWCAVFPL. Residues 398–431 lie on the Lumenal side of the membrane; sequence SQFVNWIYRVKTIRSMSGITGENISVPDEIPYNY. N-linked (GlcNAc...) asparagine glycosylation is present at N420. The helical transmembrane segment at 432–452 threads the bilayer; the sequence is QMMTFWAGLRGAVGVALALGI. The Cytoplasmic portion of the chain corresponds to 453-457; it reads QGEYK. The helical transmembrane segment at 458 to 478 threads the bilayer; sequence FTLLATVLVVVVLTVIIFGGT. Residue T490 is modified to Phosphothreonine. At S494 the chain carries Phosphoserine. T498 bears the Phosphothreonine mark. S499 carries the post-translational modification Phosphoserine. N-linked (GlcNAc...) asparagine glycosylation is found at N515, N550, and N563. The tract at residues 553 to 578 is disordered; it reads TTGGNTFGGLNETENTSPNPARSSMD. The span at 564 to 574 shows a compositional bias: polar residues; sequence ETENTSPNPAR. S569 is modified (phosphoserine).

Belongs to the monovalent cation:proton antiporter 1 (CPA1) transporter (TC 2.A.36) family. In terms of assembly, interacts with CYP6.

It localises to the endosome membrane. The protein resides in the prevacuolar compartment membrane. In terms of biological role, endosomal/prevacuolar electroneutral Na(+)/H(+) exchanger which mediates intracellular sequestration of Na(+) cations, regulates vacuolar pH and contributes to osmotolerance following sudden exposure to hyperosmotic media. Also contributes to the postdiauxic/stationary phase resistance to osmotic stress and allows for the continued growth of cells until the acquired osmotolerance response can occur. Involved in hygromycin resistance probably through its influence on the electrochemical proton gradient affecting secondarily the entrance of hygromycin. Mediates pH-dependent vesicle trafficking out of the endosome. Contributes to K(+) sequestration and homeostasis. In Saccharomyces cerevisiae (strain ATCC 204508 / S288c) (Baker's yeast), this protein is Endosomal/prevacuolar sodium/hydrogen exchanger (NHX1).